Here is a 123-residue protein sequence, read N- to C-terminus: Class I hydrophobin 2 (123 aa).

An N-terminal signal peptide occupies residues 1–16; it reads MYAYTVIAFLAASVAA. 4 cysteine pairs are disulfide-bonded: Cys35–Cys97, Cys43–Cys91, Cys44–Cys72, and Cys98–Cys116.

This sequence belongs to the fungal hydrophobin family.

The protein localises to the secreted. It localises to the cell wall. Its function is as follows. Aerial growth, conidiation, and dispersal of filamentous fungi in the environment rely upon a capability of their secreting small amphipathic proteins called hydrophobins (HPBs) with low sequence identity. Class I can self-assemble into an outermost layer of rodlet bundles on aerial cell surfaces, conferring cellular hydrophobicity that supports fungal growth, development and dispersal; whereas Class II form highly ordered films at water-air interfaces through intermolecular interactions but contribute nothing to the rodlet structure. HYD1 and HYD2 are required for the structural integrity of the long aerial chains of microconidia. Does not seem to be important for the ability to cause seedling disease. The polypeptide is Class I hydrophobin 2 (Gibberella moniliformis (Maize ear and stalk rot fungus)).